Reading from the N-terminus, the 571-residue chain is uncharacterized protein (571 aa).

Topologically, residues M1 to S3 are cytoplasmic. Residues L4–V24 form a helical membrane-spanning segment. Topologically, residues R25–S74 are periplasmic. The chain crosses the membrane as a helical span at residues V75–P95. Topologically, residues R96–R118 are cytoplasmic. Residues I119–Y139 traverse the membrane as a helical segment. Over S140 to A162 the chain is Periplasmic. The chain crosses the membrane as a helical span at residues I163 to L183. The Cytoplasmic segment spans residues R184–S191. A helical membrane pass occupies residues I192–M212. Residues G213–D240 are Periplasmic-facing. The chain crosses the membrane as a helical span at residues P241–T261. Topologically, residues N262–L283 are cytoplasmic. Residues L284–F304 traverse the membrane as a helical segment. Residues H305 to V324 lie on the Periplasmic side of the membrane. Residues L325–F345 traverse the membrane as a helical segment. Topologically, residues N346–K380 are cytoplasmic. A helical transmembrane segment spans residues F381–Q401. Topologically, residues G402–N415 are periplasmic. A helical transmembrane segment spans residues V416 to A436. Residue K437 is a topological domain, cytoplasmic. Residues V438 to F458 traverse the membrane as a helical segment. Topologically, residues H459–F460 are periplasmic. The helical transmembrane segment at L461–I481 threads the bilayer. At K482–K505 the chain is on the cytoplasmic side. Residues I506–G526 form a helical membrane-spanning segment. The Periplasmic portion of the chain corresponds to G527–W532. Residues L533–W553 form a helical membrane-spanning segment. Over R554–L571 the chain is Cytoplasmic.

It belongs to the sodium:solute symporter (SSF) (TC 2.A.21) family.

It localises to the cell inner membrane. This is an uncharacterized protein from Escherichia coli (strain K12).